A 440-amino-acid polypeptide reads, in one-letter code: Protein translocase subunit SecY (440 aa).

Transmembrane regions (helical) follow at residues 17–37, 74–94, 116–135, 155–175, 178–198, 213–233, 270–290, 316–336, 374–394, and 403–423; these read IFFT…PSPG, IFAI…LLTV, YTRY…IVAL, FFDL…VMWM, LITE…GIAT, GVVF…VVFV, VIPV…TQIV, WQYI…YVSV, LLFV…IMLD, and GATP…LTTV.

The protein belongs to the SecY/SEC61-alpha family. As to quaternary structure, component of the Sec protein translocase complex. Heterotrimer consisting of SecY, SecE and SecG subunits. The heterotrimers can form oligomers, although 1 heterotrimer is thought to be able to translocate proteins. Interacts with the ribosome. Interacts with SecDF, and other proteins may be involved. Interacts with SecA.

Its subcellular location is the cell membrane. The central subunit of the protein translocation channel SecYEG. Consists of two halves formed by TMs 1-5 and 6-10. These two domains form a lateral gate at the front which open onto the bilayer between TMs 2 and 7, and are clamped together by SecE at the back. The channel is closed by both a pore ring composed of hydrophobic SecY resides and a short helix (helix 2A) on the extracellular side of the membrane which forms a plug. The plug probably moves laterally to allow the channel to open. The ring and the pore may move independently. In Corynebacterium glutamicum (strain ATCC 13032 / DSM 20300 / JCM 1318 / BCRC 11384 / CCUG 27702 / LMG 3730 / NBRC 12168 / NCIMB 10025 / NRRL B-2784 / 534), this protein is Protein translocase subunit SecY.